The sequence spans 100 residues: Small ribosomal subunit protein uS14c (100 aa).

It belongs to the universal ribosomal protein uS14 family. In terms of assembly, part of the 30S ribosomal subunit.

The protein resides in the plastid. Its function is as follows. Binds 16S rRNA, required for the assembly of 30S particles. The chain is Small ribosomal subunit protein uS14c from Aneura mirabilis (Parasitic liverwort).